The sequence spans 943 residues: Isoleucine--tRNA ligase (943 aa).

Residues 58–68 (PYANGSIHIGH) carry the 'HIGH' region motif. Glu-567 is an L-isoleucyl-5'-AMP binding site. The 'KMSKS' region motif lies at 608–612 (KMSKS). ATP is bound at residue Lys-611. Zn(2+) contacts are provided by Cys-906, Cys-909, Cys-926, and Cys-929.

This sequence belongs to the class-I aminoacyl-tRNA synthetase family. IleS type 1 subfamily. In terms of assembly, monomer. Zn(2+) is required as a cofactor.

It is found in the cytoplasm. The catalysed reaction is tRNA(Ile) + L-isoleucine + ATP = L-isoleucyl-tRNA(Ile) + AMP + diphosphate. Catalyzes the attachment of isoleucine to tRNA(Ile). As IleRS can inadvertently accommodate and process structurally similar amino acids such as valine, to avoid such errors it has two additional distinct tRNA(Ile)-dependent editing activities. One activity is designated as 'pretransfer' editing and involves the hydrolysis of activated Val-AMP. The other activity is designated 'posttransfer' editing and involves deacylation of mischarged Val-tRNA(Ile). The chain is Isoleucine--tRNA ligase from Pseudomonas aeruginosa (strain UCBPP-PA14).